The sequence spans 975 residues: Glycine dehydrogenase (decarboxylating) (975 aa).

Position 723 is an N6-(pyridoxal phosphate)lysine (Lys723).

This sequence belongs to the GcvP family. The glycine cleavage system is composed of four proteins: P, T, L and H. Pyridoxal 5'-phosphate is required as a cofactor.

The enzyme catalyses N(6)-[(R)-lipoyl]-L-lysyl-[glycine-cleavage complex H protein] + glycine + H(+) = N(6)-[(R)-S(8)-aminomethyldihydrolipoyl]-L-lysyl-[glycine-cleavage complex H protein] + CO2. In terms of biological role, the glycine cleavage system catalyzes the degradation of glycine. The P protein binds the alpha-amino group of glycine through its pyridoxal phosphate cofactor; CO(2) is released and the remaining methylamine moiety is then transferred to the lipoamide cofactor of the H protein. In Burkholderia lata (strain ATCC 17760 / DSM 23089 / LMG 22485 / NCIMB 9086 / R18194 / 383), this protein is Glycine dehydrogenase (decarboxylating).